Reading from the N-terminus, the 504-residue chain is Peptidyl-prolyl cis-trans isomerase-like 4 (504 aa).

The region spanning 1-169 (MSVMLETSLG…QNIRIRHVEI (169 aa)) is the PPIase cyclophilin-type domain. The region spanning 246-324 (NILFVCKLNP…RRIWVDFSQS (79 aa)) is the RRM domain. Polar residues predominate over residues 330–339 (RSMLSSSNPT). The tract at residues 330 to 504 (RSMLSSSNPT…RERDDRDRRR (175 aa)) is disordered. A compositionally biased stretch (gly residues) spans 340-354 (GRGGRGGRGGRGGNY). Composition is skewed to basic and acidic residues over residues 356–381 (GRRDGDRDRDRDSGWSSRRDAPDSRR) and 416–504 (SKRD…DRRR).

This sequence belongs to the cyclophilin-type PPIase family. PPIL4 subfamily.

It localises to the nucleus. It catalyses the reaction [protein]-peptidylproline (omega=180) = [protein]-peptidylproline (omega=0). PPIases accelerate the folding of proteins. It catalyzes the cis-trans isomerization of proline imidic peptide bonds in oligopeptides. This Cryptococcus neoformans var. neoformans serotype D (strain B-3501A) (Filobasidiella neoformans) protein is Peptidyl-prolyl cis-trans isomerase-like 4 (CYP6).